The primary structure comprises 661 residues: Coagulation factor XIII B chain (661 aa).

The N-terminal stretch at 1-20 is a signal peptide; that stretch reads MRLKNLTFIIILIISGELYA. 10 consecutive Sushi domains span residues 24–88, 89–148, 151–210, 211–269, 272–329, 334–391, 394–452, 453–516, 522–580, and 581–647; these read PCGF…PRCF, KKCT…TCRK, ETCL…KCTK, LKCS…VCEG, NRCP…KCIE, VACE…ECVE, ENCK…VCLE, PCTV…PLCT, GMCT…LCLE, and PCTL…PRCI. 20 disulfides stabilise this stretch: cysteine 25–cysteine 76, cysteine 59–cysteine 87, cysteine 91–cysteine 135, cysteine 118–cysteine 146, cysteine 153–cysteine 197, cysteine 180–cysteine 208, cysteine 213–cysteine 255, cysteine 241–cysteine 267, cysteine 274–cysteine 316, cysteine 302–cysteine 327, cysteine 336–cysteine 378, cysteine 364–cysteine 389, cysteine 396–cysteine 439, cysteine 425–cysteine 450, cysteine 454–cysteine 505, cysteine 486–cysteine 515, cysteine 524–cysteine 567, cysteine 553–cysteine 578, cysteine 582–cysteine 636, and cysteine 616–cysteine 646. Asparagine 162 carries N-linked (GlcNAc...) asparagine glycosylation. Residue asparagine 545 is glycosylated (N-linked (GlcNAc...) asparagine). Positions 617–619 match the Cell attachment site motif; it reads RGD.

In terms of assembly, tetramer of two A chains (F13A1) and two B (F13B) chains.

It is found in the secreted. The B chain of factor XIII is not catalytically active, but is thought to stabilize the A subunits and regulate the rate of transglutaminase formation by thrombin. This chain is Coagulation factor XIII B chain (F13B), found in Homo sapiens (Human).